We begin with the raw amino-acid sequence, 296 residues long: tRNA-cytidine(32) 2-sulfurtransferase (296 aa).

The PP-loop motif signature appears at 72-77; the sequence is SGGKDS. C147, C150, and C238 together coordinate [4Fe-4S] cluster.

The protein belongs to the TtcA family. Homodimer. The cofactor is Mg(2+). It depends on [4Fe-4S] cluster as a cofactor.

The protein resides in the cytoplasm. The enzyme catalyses cytidine(32) in tRNA + S-sulfanyl-L-cysteinyl-[cysteine desulfurase] + AH2 + ATP = 2-thiocytidine(32) in tRNA + L-cysteinyl-[cysteine desulfurase] + A + AMP + diphosphate + H(+). Its pathway is tRNA modification. Its function is as follows. Catalyzes the ATP-dependent 2-thiolation of cytidine in position 32 of tRNA, to form 2-thiocytidine (s(2)C32). The sulfur atoms are provided by the cysteine/cysteine desulfurase (IscS) system. This is tRNA-cytidine(32) 2-sulfurtransferase from Sinorhizobium fredii (strain NBRC 101917 / NGR234).